Here is a 297-residue protein sequence, read N- to C-terminus: D-aminoacyl-tRNA deacylase (297 aa).

It belongs to the DtdA deacylase family. In terms of assembly, monomer. The cofactor is Zn(2+).

It carries out the reaction a D-aminoacyl-tRNA + H2O = a tRNA + a D-alpha-amino acid + H(+). It catalyses the reaction glycyl-tRNA(Ala) + H2O = tRNA(Ala) + glycine + H(+). Its function is as follows. D-aminoacyl-tRNA deacylase with broad substrate specificity. By recycling D-aminoacyl-tRNA to D-amino acids and free tRNA molecules, this enzyme counteracts the toxicity associated with the formation of D-aminoacyl-tRNA entities in vivo. This Methanosarcina acetivorans (strain ATCC 35395 / DSM 2834 / JCM 12185 / C2A) protein is D-aminoacyl-tRNA deacylase.